The chain runs to 425 residues: Serine--tRNA ligase (425 aa).

An L-serine-binding site is contributed by 230-232 (TAE). ATP is bound at residue 261–263 (RSE). Glutamate 284 is an L-serine binding site. Residue 348-351 (EISS) participates in ATP binding. Residue serine 383 coordinates L-serine.

This sequence belongs to the class-II aminoacyl-tRNA synthetase family. Type-1 seryl-tRNA synthetase subfamily. In terms of assembly, homodimer. The tRNA molecule binds across the dimer.

Its subcellular location is the cytoplasm. The catalysed reaction is tRNA(Ser) + L-serine + ATP = L-seryl-tRNA(Ser) + AMP + diphosphate + H(+). It catalyses the reaction tRNA(Sec) + L-serine + ATP = L-seryl-tRNA(Sec) + AMP + diphosphate + H(+). It functions in the pathway aminoacyl-tRNA biosynthesis; selenocysteinyl-tRNA(Sec) biosynthesis; L-seryl-tRNA(Sec) from L-serine and tRNA(Sec): step 1/1. Catalyzes the attachment of serine to tRNA(Ser). Is also able to aminoacylate tRNA(Sec) with serine, to form the misacylated tRNA L-seryl-tRNA(Sec), which will be further converted into selenocysteinyl-tRNA(Sec). In Ligilactobacillus salivarius (strain UCC118) (Lactobacillus salivarius), this protein is Serine--tRNA ligase.